The chain runs to 199 residues: Large ribosomal subunit protein bL25 (199 aa).

This sequence belongs to the bacterial ribosomal protein bL25 family. CTC subfamily. In terms of assembly, part of the 50S ribosomal subunit; part of the 5S rRNA/L5/L18/L25 subcomplex. Contacts the 5S rRNA. Binds to the 5S rRNA independently of L5 and L18.

Its function is as follows. This is one of the proteins that binds to the 5S RNA in the ribosome where it forms part of the central protuberance. In Nostoc punctiforme (strain ATCC 29133 / PCC 73102), this protein is Large ribosomal subunit protein bL25.